The following is a 222-amino-acid chain: Triosephosphate isomerase (222 aa).

N9 to K11 is a binding site for substrate. H93 (electrophile) is an active-site residue. Catalysis depends on E141, which acts as the Proton acceptor. Residues I146, G181, and A202–S203 each bind substrate.

The protein belongs to the triosephosphate isomerase family. As to quaternary structure, homotetramer; dimer of dimers.

Its subcellular location is the cytoplasm. The catalysed reaction is D-glyceraldehyde 3-phosphate = dihydroxyacetone phosphate. The protein operates within carbohydrate biosynthesis; gluconeogenesis. It functions in the pathway carbohydrate degradation; glycolysis; D-glyceraldehyde 3-phosphate from glycerone phosphate: step 1/1. Its function is as follows. Involved in the gluconeogenesis. Catalyzes stereospecifically the conversion of dihydroxyacetone phosphate (DHAP) to D-glyceraldehyde-3-phosphate (G3P). The chain is Triosephosphate isomerase from Methanosarcina mazei (strain ATCC BAA-159 / DSM 3647 / Goe1 / Go1 / JCM 11833 / OCM 88) (Methanosarcina frisia).